The sequence spans 975 residues: Probable outer membrane protein PmpA (975 aa).

The signal sequence occupies residues M1–A51. Residues R699 to F975 form the Autotransporter domain.

The protein belongs to the PMP outer membrane protein family.

It is found in the secreted. It localises to the cell wall. The protein resides in the cell outer membrane. In Chlamydia trachomatis serovar D (strain ATCC VR-885 / DSM 19411 / UW-3/Cx), this protein is Probable outer membrane protein PmpA (pmpA).